The following is a 483-amino-acid chain: Islet cell autoantigen 1 (483 aa).

Residues 51–254 (ASDADLDAKL…TSHTMAAIHE (204 aa)) enclose the AH domain. A disordered region spans residues 281–321 (EEKKKINQQESTDAAVQEPSQLISLEEENQRKESSSFKTED). Polar residues predominate over residues 288-303 (QQESTDAAVQEPSQLI). The span at 308–321 (ENQRKESSSFKTED) shows a compositional bias: basic and acidic residues.

Expressed abundantly in pancreas, heart and brain with low levels of expression in lung, kidney, liver and thyroid.

The protein localises to the cytoplasm. It localises to the cytosol. The protein resides in the golgi apparatus membrane. It is found in the cytoplasmic vesicle. Its subcellular location is the secretory vesicle membrane. The protein localises to the secretory vesicle. It localises to the synaptic vesicle membrane. In terms of biological role, may play a role in neurotransmitter secretion. The polypeptide is Islet cell autoantigen 1 (ICA1) (Homo sapiens (Human)).